The following is a 455-amino-acid chain: Bifunctional protein GlmU (455 aa).

Residues 1 to 230 (MVNKNAIILA…FDESMGVNDR (230 aa)) form a pyrophosphorylase region. UDP-N-acetyl-alpha-D-glucosamine-binding positions include 9 to 12 (LAAG), lysine 23, glutamine 73, 78 to 79 (GT), 101 to 103 (SGD), glycine 140, glutamate 155, asparagine 170, and asparagine 228. Mg(2+) is bound at residue aspartate 103. Residue asparagine 228 participates in Mg(2+) binding. Residues 231 to 251 (SALAKATKIMQKRINTQLMKD) are linker. Residues 252–455 (GVTLVDPETA…KPGYAKKLPW (204 aa)) form an N-acetyltransferase region. Residues arginine 333 and lysine 351 each contribute to the UDP-N-acetyl-alpha-D-glucosamine site. Histidine 363 serves as the catalytic Proton acceptor. Tyrosine 366 and asparagine 377 together coordinate UDP-N-acetyl-alpha-D-glucosamine. Residues 386-387 (NY), serine 405, alanine 423, and arginine 440 each bind acetyl-CoA.

In the N-terminal section; belongs to the N-acetylglucosamine-1-phosphate uridyltransferase family. It in the C-terminal section; belongs to the transferase hexapeptide repeat family. As to quaternary structure, homotrimer. Mg(2+) serves as cofactor.

Its subcellular location is the cytoplasm. The enzyme catalyses alpha-D-glucosamine 1-phosphate + acetyl-CoA = N-acetyl-alpha-D-glucosamine 1-phosphate + CoA + H(+). It catalyses the reaction N-acetyl-alpha-D-glucosamine 1-phosphate + UTP + H(+) = UDP-N-acetyl-alpha-D-glucosamine + diphosphate. It participates in nucleotide-sugar biosynthesis; UDP-N-acetyl-alpha-D-glucosamine biosynthesis; N-acetyl-alpha-D-glucosamine 1-phosphate from alpha-D-glucosamine 6-phosphate (route II): step 2/2. The protein operates within nucleotide-sugar biosynthesis; UDP-N-acetyl-alpha-D-glucosamine biosynthesis; UDP-N-acetyl-alpha-D-glucosamine from N-acetyl-alpha-D-glucosamine 1-phosphate: step 1/1. It functions in the pathway bacterial outer membrane biogenesis; LPS lipid A biosynthesis. In terms of biological role, catalyzes the last two sequential reactions in the de novo biosynthetic pathway for UDP-N-acetylglucosamine (UDP-GlcNAc). The C-terminal domain catalyzes the transfer of acetyl group from acetyl coenzyme A to glucosamine-1-phosphate (GlcN-1-P) to produce N-acetylglucosamine-1-phosphate (GlcNAc-1-P), which is converted into UDP-GlcNAc by the transfer of uridine 5-monophosphate (from uridine 5-triphosphate), a reaction catalyzed by the N-terminal domain. This is Bifunctional protein GlmU from Limosilactobacillus fermentum (strain NBRC 3956 / LMG 18251) (Lactobacillus fermentum).